We begin with the raw amino-acid sequence, 345 residues long: Dihydroorotase (345 aa).

Zn(2+)-binding residues include His14 and His16. Substrate is bound by residues 16-18 and Asn42; that span reads HLR. Zn(2+)-binding residues include Lys100, His137, and His175. The residue at position 100 (Lys100) is an N6-carboxylysine. His137 contributes to the substrate binding site. Residue Leu220 participates in substrate binding. Position 248 (Asp248) interacts with Zn(2+). The active site involves Asp248. Residues His252 and Ala264 each coordinate substrate.

The protein belongs to the metallo-dependent hydrolases superfamily. DHOase family. Class II DHOase subfamily. In terms of assembly, homodimer. The cofactor is Zn(2+).

The enzyme catalyses (S)-dihydroorotate + H2O = N-carbamoyl-L-aspartate + H(+). Its pathway is pyrimidine metabolism; UMP biosynthesis via de novo pathway; (S)-dihydroorotate from bicarbonate: step 3/3. In terms of biological role, catalyzes the reversible cyclization of carbamoyl aspartate to dihydroorotate. This chain is Dihydroorotase, found in Methylobacillus flagellatus (strain ATCC 51484 / DSM 6875 / VKM B-1610 / KT).